A 245-amino-acid chain; its full sequence is E3 ubiquitin-protein ligase RNF138 (245 aa).

The RING-type zinc finger occupies 18 to 58; that stretch reads CPVCQEVLKTPVRTAACQHVFCRKCFLTAMRESGIHCPLCR. 4 residues coordinate Zn(2+): Cys-86, Cys-89, His-101, and Cys-105. The C2HC RNF-type zinc finger occupies 86–105; the sequence is CRCCSKKIKFYRMRHHYKSC. The tract at residues 128-154 is disordered; sequence VRSSNRSETSASDNTETYQEDTSSSGH. Thr-142 carries the post-translational modification Phosphothreonine. 2 consecutive C2H2-type zinc fingers follow at residues 157–180 and 187–215; these read FKCPLCQESNFTRQRLLDHCNSNH and VTCPICVSLPWGDPSQITRNFVSHLNQRH. The 19-residue stretch at 225–243 folds into the UIM domain; that stretch reads LQLDEETQYQTAVEESFQV.

In terms of assembly, interacts with NLK. Interacts with XRCC5/Ku80. Interacts with RBBP8/CtIP. In terms of processing, auto-ubiquitinated.

It is found in the chromosome. It catalyses the reaction S-ubiquitinyl-[E2 ubiquitin-conjugating enzyme]-L-cysteine + [acceptor protein]-L-lysine = [E2 ubiquitin-conjugating enzyme]-L-cysteine + N(6)-ubiquitinyl-[acceptor protein]-L-lysine.. It functions in the pathway protein modification; protein ubiquitination. E3 ubiquitin-protein ligase involved in DNA damage response by promoting DNA resection and homologous recombination. Recruited to sites of double-strand breaks following DNA damage and specifically promotes double-strand break repair via homologous recombination. Two different, non-exclusive, mechanisms have been proposed. According to a report, regulates the choice of double-strand break repair by favoring homologous recombination over non-homologous end joining (NHEJ): acts by mediating ubiquitination of XRCC5/Ku80, leading to remove the Ku complex from DNA breaks, thereby promoting homologous recombination. According to another report, cooperates with UBE2Ds E2 ubiquitin ligases (UBE2D1, UBE2D2, UBE2D3 or UBE2D4) to promote homologous recombination by mediating ubiquitination of RBBP8/CtIP. Together with NLK, involved in the ubiquitination and degradation of TCF/LEF. Also exhibits auto-ubiquitination activity in combination with UBE2K. May act as a negative regulator in the Wnt/beta-catenin-mediated signaling pathway. The sequence is that of E3 ubiquitin-protein ligase RNF138 from Mus musculus (Mouse).